The following is a 138-amino-acid chain: Secreted RxLR effector protein 91 (138 aa).

The signal sequence occupies residues 1-18; that stretch reads MVIPHIICLPMALHLWTC. A RxLR motif is present at residues 34 to 37; that stretch reads RRLR. The N-linked (GlcNAc...) asparagine glycan is linked to asparagine 93.

This sequence belongs to the RxLR effector family.

The protein resides in the secreted. Its subcellular location is the host nucleus. Its function is as follows. Secreted effector that completely suppresses the host cell death induced by cell death-inducing proteins. The protein is Secreted RxLR effector protein 91 of Plasmopara viticola (Downy mildew of grapevine).